The sequence spans 4730 residues: Dynein heavy chain, cytoplasmic (4730 aa).

Disordered stretches follow at residues methionine 1–proline 23 and threonine 91–serine 120. Residues methionine 1–tyrosine 1935 form a stem region. A compositionally biased stretch (low complexity) spans serine 10 to proline 23. Positions valine 867 to serine 900 form a coiled coil. The interval glutamate 964 to isoleucine 1016 is disordered. A compositionally biased stretch (polar residues) spans serine 969–lysine 978. Over residues threonine 1002–isoleucine 1016 the composition is skewed to low complexity. 4 coiled-coil regions span residues glutamate 1204 to serine 1224, alanine 1343 to aspartate 1372, arginine 1425 to leucine 1441, and alanine 1661 to arginine 1689. AAA regions lie at residues tyrosine 1936–serine 2158, lysine 2238–leucine 2531, glutamate 2635–alanine 2885, and valine 2978–glutamine 3252. Residue glycine 1974–threonine 1981 coordinates ATP. Residues isoleucine 2231–glutamine 2253 adopt a coiled-coil conformation. Glycine 2276–threonine 2283 contacts ATP. The disordered stretch occupies residues glutamate 2437–serine 2486. Over residues proline 2441–glutamate 2451 the composition is skewed to basic and acidic residues. A coiled-coil region spans residues glutamine 2442–threonine 2462. Residues glutamine 2454 to serine 2486 show a composition bias toward low complexity. ATP is bound by residues glycine 2674 to threonine 2681 and glycine 3016 to serine 3023. 3 coiled-coil regions span residues isoleucine 3271–aspartate 3349, alanine 3483–methionine 3585, and threonine 3854–glutamate 3881. Residues isoleucine 3271–methionine 3585 form a stalk region. AAA regions lie at residues leucine 3638 to leucine 3867 and serine 4098 to tyrosine 4312. The segment at lysine 4432–lysine 4465 is disordered. A compositionally biased stretch (basic and acidic residues) spans serine 4449–lysine 4463.

This sequence belongs to the dynein heavy chain family. In terms of assembly, consists of at least two heavy chains and a number of intermediate and light chains.

The protein localises to the cytoplasm. Its subcellular location is the cytoskeleton. Its function is as follows. Cytoplasmic dynein acts as a motor for the intracellular retrograde motility of vesicles and organelles along microtubules. Dynein has ATPase activity; the force-producing power stroke is thought to occur on release of ADP. In Dictyostelium discoideum (Social amoeba), this protein is Dynein heavy chain, cytoplasmic (dhcA).